Consider the following 170-residue polypeptide: Large ribosomal subunit protein uL10 (170 aa).

This sequence belongs to the universal ribosomal protein uL10 family. Part of the ribosomal stalk of the 50S ribosomal subunit. The N-terminus interacts with L11 and the large rRNA to form the base of the stalk. The C-terminus forms an elongated spine to which L12 dimers bind in a sequential fashion forming a multimeric L10(L12)X complex.

Functionally, forms part of the ribosomal stalk, playing a central role in the interaction of the ribosome with GTP-bound translation factors. This chain is Large ribosomal subunit protein uL10, found in Fusobacterium nucleatum subsp. nucleatum (strain ATCC 25586 / DSM 15643 / BCRC 10681 / CIP 101130 / JCM 8532 / KCTC 2640 / LMG 13131 / VPI 4355).